Reading from the N-terminus, the 481-residue chain is 4-hydroxyphenylacetate 3-monooxygenase oxygenase component (481 aa).

Residues 100 to 104 and histidine 142 contribute to the substrate site; that span reads RSPDY. FAD is bound by residues 142-144, 148-151, and threonine 185; these read HAL and QVNR. 197–198 contributes to the substrate binding site; the sequence is ST. 444–447 lines the FAD pocket; it reads DPVR.

It belongs to the FADH(2)-utilizing monooxygenase family. As to quaternary structure, homotetramer consisting of a dimer of dimers. 4-HPA 3-monooxygenase consists of a reductase component HpaC and an oxygenase component HpaB.

The catalysed reaction is 4-hydroxyphenylacetate + FADH2 + O2 = 3,4-dihydroxyphenylacetate + FAD + H2O + H(+). Its pathway is aromatic compound metabolism; 4-hydroxyphenylacetate degradation; pyruvate and succinate semialdehyde from 4-hydroxyphenylacetate: step 1/7. In terms of biological role, utilizes FADH(2) supplied by HpaC, to catalyze the hydroxylation of 4-hydroxyphenylacetic acid, leading to the production of 3,4-dihydroxyphenylacetic acid (DHPA). The polypeptide is 4-hydroxyphenylacetate 3-monooxygenase oxygenase component (Thermus thermophilus (strain ATCC 27634 / DSM 579 / HB8)).